Consider the following 263-residue polypeptide: Hydroxyethylthiazole kinase (263 aa).

M39 contacts substrate. ATP is bound by residues K115 and T160. Substrate is bound at residue G187.

This sequence belongs to the Thz kinase family. Mg(2+) is required as a cofactor.

It carries out the reaction 5-(2-hydroxyethyl)-4-methylthiazole + ATP = 4-methyl-5-(2-phosphooxyethyl)-thiazole + ADP + H(+). Its pathway is cofactor biosynthesis; thiamine diphosphate biosynthesis; 4-methyl-5-(2-phosphoethyl)-thiazole from 5-(2-hydroxyethyl)-4-methylthiazole: step 1/1. Catalyzes the phosphorylation of the hydroxyl group of 4-methyl-5-beta-hydroxyethylthiazole (THZ). The chain is Hydroxyethylthiazole kinase from Staphylococcus haemolyticus (strain JCSC1435).